Reading from the N-terminus, the 164-residue chain is Large ribosomal subunit protein uL11 (164 aa).

The protein belongs to the universal ribosomal protein uL11 family. In terms of assembly, part of the ribosomal stalk of the 50S ribosomal subunit. Interacts with L10 and the large rRNA to form the base of the stalk. L10 forms an elongated spine to which L12 dimers bind in a sequential fashion forming a multimeric L10(L12)X complex.

Forms part of the ribosomal stalk which helps the ribosome interact with GTP-bound translation factors. This is Large ribosomal subunit protein uL11 from Pyrococcus abyssi (strain GE5 / Orsay).